Consider the following 88-residue polypeptide: RQC P-site tRNA stabilizing factor (88 aa).

The 67-residue stretch at 1–67 (MRLDKFLKVS…VEITNVKETV (67 aa)) folds into the S4 RNA-binding domain.

The protein belongs to the RqcP family. Associates with stalled 50S ribosomal subunits. Binds to RqcH, 23S rRNA and the P-site tRNA. Does not require RqcH for association with 50S subunits.

Its function is as follows. Key component of the ribosome quality control system (RQC), a ribosome-associated complex that mediates the extraction of incompletely synthesized nascent chains from stalled ribosomes and their subsequent degradation. RqcH recruits Ala-charged tRNA, and with RqcP directs the elongation of stalled nascent chains on 50S ribosomal subunits, leading to non-templated C-terminal alanine extensions (Ala tail). The Ala tail promotes nascent chain degradation. RqcP is associated with the translocation-like movement of the peptidyl-tRNA from the A-site into the P-site. This Halalkalibacterium halodurans (strain ATCC BAA-125 / DSM 18197 / FERM 7344 / JCM 9153 / C-125) (Bacillus halodurans) protein is RQC P-site tRNA stabilizing factor.